The chain runs to 438 residues: Histidine--tRNA ligase (438 aa).

It belongs to the class-II aminoacyl-tRNA synthetase family. In terms of assembly, homodimer.

It localises to the cytoplasm. It carries out the reaction tRNA(His) + L-histidine + ATP = L-histidyl-tRNA(His) + AMP + diphosphate + H(+). In Thermobifida fusca (strain YX), this protein is Histidine--tRNA ligase (hisS).